Consider the following 520-residue polypeptide: Cytochrome P450 734A1 (520 aa).

A helical membrane pass occupies residues 13–33; that stretch reads VLVLSVILSLVIVKGMSLLWW. Cysteine 463 contributes to the heme binding site.

Belongs to the cytochrome P450 family. The cofactor is heme.

The protein localises to the membrane. Its function is as follows. Cytochrome P450 involved in brassinosteroids (BRs) inactivation and regulation of BRs homeostasis. Inactivates the BRs castasterone (CS) and brassinolide (BL) through carbon 26 hydroxylation. Acts in association with CYP72C1 to inactivate BRs and modulate photomorphogenesis. The polypeptide is Cytochrome P450 734A1 (CYP734A1) (Arabidopsis thaliana (Mouse-ear cress)).